The chain runs to 771 residues: MHQHIQVPPLEGKSRINYVNLPLINGDKLRTAKTLVDKAIKEKKVFSVQGPYPVIRAGLRARGWVERRLPRPSFSQPRRHDHETETTDEGDSSDEDDLGEEVERDDEAEDLYDLMSRLVRHETPYFYWTTRRDSVDCRSLRKEQMTNHYAKAGSFTTKVGLCMHLRNLQWFDAADPDTFFPRCYRLGAQDEKHAFIDDFRRTACTSLLLYVLEKYEGDSEGEKMGEVHNAKSHGLRKTRKQHSSQRIETSVIDSALHVCQEYLNSLEHCDIDNNLETNSTISEQQWKVFLQNYYLVVHEGINIEGCEYYLERCKCMLEQMRQVCPQMENDGICNIWIIKPGAKSRGRGIMCMNKLDDMLGLVDGDHCIMKDSKWVVQKYIERPLLVHDTKFDVRQWFLVTDWNPLTVWFYRECYLRFSTQPYSTHTLDSSVHLCNNSIQKHYQPSPDRSPSLPAECMWSCSQFRSWLAASGRAALWKAVVVPGMQKAVIQTLLTAQDSVEPRKASFELYGADFMLGRDLRPWLLEINASPTMAPSTGVTARLCPAVQEDTLRVVLDRRSERNTDTGGFQLIYKQAAVDVPQYVGVNLLIEGTSIRRPRAPVHKSLIQSHPEPLSKSTNHKSSLLSSPCTSGKENQSEEVKRACPNLPNRKITMDQSLIFHPKRKRPHRLVLPSTCCVLPNPTELHHPQRLSHTQPQSDRPHTHRTRSNLPTLYRPTPSVEVINIRPRQALTSSHYIHKIHTVNLSYPVLRMQQNHRRSKNTFAEREGPKSS.

Residues 70–106 (PRPSFSQPRRHDHETETTDEGDSSDEDDLGEEVERDD) are disordered. Acidic residues predominate over residues 86-106 (TTDEGDSSDEDDLGEEVERDD). Residues 220 to 566 (EGEKMGEVHN…RRSERNTDTG (347 aa)) form the TTL domain. ATP contacts are provided by residues K339, 345-346 (RG), 377-380 (QKYI), 390-392 (KFD), and 434-435 (CN). Position 345 (R345) interacts with a protein. An L-glutamate-binding site is contributed by S437. 3 residues coordinate Mg(2+): D512, E525, and N527. Position 525 (E525) interacts with ATP. 2 disordered regions span residues 605 to 640 (LIQS…EEVK) and 682 to 713 (TELH…PTLY). A compositionally biased stretch (polar residues) spans 614 to 633 (SKSTNHKSSLLSSPCTSGKE).

Requires Mg(2+) as cofactor.

The protein localises to the cytoplasm. The protein resides in the cytoskeleton. It is found in the cell projection. It localises to the cilium. Its subcellular location is the cilium axoneme. The protein localises to the flagellum axoneme. It catalyses the reaction L-glutamyl-[protein] + glycine + ATP = glycyl-L-glutamyl-[protein] + ADP + phosphate + H(+). Monoglycylase which modifies alpha- and beta-tubulin, adding a single glycine on the gamma-carboxyl groups of specific glutamate residues to generate monoglycine side chains within the C-terminal tail of tubulin. Not involved in elongation step of the polyglycylation reaction. Preferentially glycylates a beta-tail peptide over the alpha-tail, although shifts its preference toward alpha-tail as beta-tail glutamylation increases. Competes with polyglutamylases for modification site on beta-tubulin substrate, thereby creating an anticorrelation between glycylation and glutamylation reactions. Not involved in elongation step of the polyglycylation reaction. The chain is Tubulin monoglycylase TTLL3 (ttll3) from Danio rerio (Zebrafish).